The primary structure comprises 293 residues: Pyridoxal 5'-phosphate synthase subunit PdxS (293 aa).

Aspartate 23 lines the D-ribose 5-phosphate pocket. Lysine 80 acts as the Schiff-base intermediate with D-ribose 5-phosphate in catalysis. Glycine 152 contacts D-ribose 5-phosphate. Arginine 164 contacts D-glyceraldehyde 3-phosphate. D-ribose 5-phosphate is bound by residues glycine 213 and 234–235 (GS).

It belongs to the PdxS/SNZ family. In the presence of PdxT, forms a dodecamer of heterodimers.

It catalyses the reaction aldehydo-D-ribose 5-phosphate + D-glyceraldehyde 3-phosphate + L-glutamine = pyridoxal 5'-phosphate + L-glutamate + phosphate + 3 H2O + H(+). Its pathway is cofactor biosynthesis; pyridoxal 5'-phosphate biosynthesis. Functionally, catalyzes the formation of pyridoxal 5'-phosphate from ribose 5-phosphate (RBP), glyceraldehyde 3-phosphate (G3P) and ammonia. The ammonia is provided by the PdxT subunit. Can also use ribulose 5-phosphate and dihydroxyacetone phosphate as substrates, resulting from enzyme-catalyzed isomerization of RBP and G3P, respectively. The protein is Pyridoxal 5'-phosphate synthase subunit PdxS of Roseiflexus sp. (strain RS-1).